The primary structure comprises 436 residues: GTPase Der (436 aa).

EngA-type G domains follow at residues 4–167 and 176–351; these read PVIA…PKIE and IRFS…ESHS. GTP is bound by residues 10 to 17, 57 to 61, 119 to 122, 182 to 189, 229 to 233, and 294 to 297; these read GRPNVGKS, DTGGI, NKVD, DTAGM, and NKWD. The KH-like domain maps to 352 to 436; the sequence is IRIQTNVLND…PIHIIARARD (85 aa).

The protein belongs to the TRAFAC class TrmE-Era-EngA-EngB-Septin-like GTPase superfamily. EngA (Der) GTPase family. In terms of assembly, associates with the 50S ribosomal subunit.

In terms of biological role, GTPase that plays an essential role in the late steps of ribosome biogenesis. In Bacillus anthracis (strain A0248), this protein is GTPase Der.